A 530-amino-acid chain; its full sequence is Retinoic acid-induced protein 2 (530 aa).

The segment covering 1 to 13 (MDDLQSQNLSMDM) has biased composition (polar residues). The tract at residues 1 to 22 (MDDLQSQNLSMDMTDSPPALAN) is disordered.

The protein is Retinoic acid-induced protein 2 (RAI2) of Homo sapiens (Human).